The chain runs to 111 residues: uncharacterized protein (111 aa).

3 consecutive transmembrane segments (helical) span residues 4–23, 39–61, and 65–84; these read LHQVLIACVIGGIMGILGHV, IYLGFLEDWFIGMTASILLVLSA, and SGIQLVILSIISGYGGEAVL.

It is found in the cell membrane. This is an uncharacterized protein from Bacillus subtilis (strain 168).